The primary structure comprises 415 residues: Glucose-6-phosphate isomerase (415 aa).

The Proton donor role is filled by E267. Catalysis depends on residues H293 and K406.

Belongs to the GPI family.

It localises to the cytoplasm. It carries out the reaction alpha-D-glucose 6-phosphate = beta-D-fructose 6-phosphate. It participates in carbohydrate biosynthesis; gluconeogenesis. The protein operates within carbohydrate degradation; glycolysis; D-glyceraldehyde 3-phosphate and glycerone phosphate from D-glucose: step 2/4. In terms of biological role, catalyzes the reversible isomerization of glucose-6-phosphate to fructose-6-phosphate. The chain is Glucose-6-phosphate isomerase from Thermus thermophilus (strain ATCC 27634 / DSM 579 / HB8).